Consider the following 255-residue polypeptide: Small ribosomal subunit protein uS2 (255 aa).

Belongs to the universal ribosomal protein uS2 family.

The protein is Small ribosomal subunit protein uS2 of Streptococcus thermophilus (strain CNRZ 1066).